An 88-amino-acid chain; its full sequence is Prolevitide (88 aa).

An N-terminal signal peptide occupies residues 1 to 20 (MYKGIFLCVLFAVICANSLA). Gln74 carries the post-translational modification Pyrrolidone carboxylic acid. Glutamine amide is present on Gln87.

The protein belongs to the gastrin/cholecystokinin family. In terms of tissue distribution, expressed by the skin glands.

Its subcellular location is the secreted. This chain is Prolevitide, found in Xenopus laevis (African clawed frog).